A 170-amino-acid polypeptide reads, in one-letter code: Adenine phosphoribosyltransferase (170 aa).

It belongs to the purine/pyrimidine phosphoribosyltransferase family. As to quaternary structure, homodimer.

It is found in the cytoplasm. The enzyme catalyses AMP + diphosphate = 5-phospho-alpha-D-ribose 1-diphosphate + adenine. Its pathway is purine metabolism; AMP biosynthesis via salvage pathway; AMP from adenine: step 1/1. In terms of biological role, catalyzes a salvage reaction resulting in the formation of AMP, that is energically less costly than de novo synthesis. This Brachyspira hyodysenteriae (strain ATCC 49526 / WA1) protein is Adenine phosphoribosyltransferase.